A 254-amino-acid chain; its full sequence is NAD kinase (254 aa).

The active-site Proton acceptor is the D44. NAD(+) is bound by residues 44 to 45 (DG), 114 to 115 (NE), D144, A152, 155 to 160 (TAYNYS), and A179.

The protein belongs to the NAD kinase family. The cofactor is a divalent metal cation.

It localises to the cytoplasm. It catalyses the reaction NAD(+) + ATP = ADP + NADP(+) + H(+). Functionally, involved in the regulation of the intracellular balance of NAD and NADP, and is a key enzyme in the biosynthesis of NADP. Catalyzes specifically the phosphorylation on 2'-hydroxyl of the adenosine moiety of NAD to yield NADP. This chain is NAD kinase, found in Cereibacter sphaeroides (strain ATCC 17023 / DSM 158 / JCM 6121 / CCUG 31486 / LMG 2827 / NBRC 12203 / NCIMB 8253 / ATH 2.4.1.) (Rhodobacter sphaeroides).